The primary structure comprises 396 residues: NADH-quinone oxidoreductase subunit D 1 (396 aa).

It belongs to the complex I 49 kDa subunit family. As to quaternary structure, NDH-1 is composed of 14 different subunits. Subunits NuoB, C, D, E, F, and G constitute the peripheral sector of the complex.

The protein localises to the cell inner membrane. The enzyme catalyses a quinone + NADH + 5 H(+)(in) = a quinol + NAD(+) + 4 H(+)(out). Functionally, NDH-1 shuttles electrons from NADH, via FMN and iron-sulfur (Fe-S) centers, to quinones in the respiratory chain. The immediate electron acceptor for the enzyme in this species is believed to be ubiquinone. Couples the redox reaction to proton translocation (for every two electrons transferred, four hydrogen ions are translocated across the cytoplasmic membrane), and thus conserves the redox energy in a proton gradient. The chain is NADH-quinone oxidoreductase subunit D 1 from Beijerinckia indica subsp. indica (strain ATCC 9039 / DSM 1715 / NCIMB 8712).